A 499-amino-acid polypeptide reads, in one-letter code: BTB/POZ domain-containing protein 16 (499 aa).

The region spanning 143 to 199 (INDPLVTREAFATALKNLYMQEVKICLDDVLGVLAAAHILQFGSLFQRCVTVMMSGL) is the BTB domain.

The chain is BTB/POZ domain-containing protein 16 (BTBD16) from Bos taurus (Bovine).